The sequence spans 471 residues: Indole-3-acetate beta-glucosyltransferase (471 aa).

The active-site Proton acceptor is histidine 15. Residue histidine 15 participates in an anthocyanidin binding. Residue aspartate 107 is the Charge relay of the active site. 9 residues coordinate UDP-alpha-D-glucose: threonine 129, glutamine 344, histidine 359, tryptophan 362, asparagine 363, serine 364, glutamate 367, aspartate 383, and glutamine 384.

This sequence belongs to the UDP-glycosyltransferase family.

The catalysed reaction is (indol-3-yl)acetate + UDP-alpha-D-glucose = 1-O-(indol-3-ylacetyl)-beta-D-glucose + UDP. It functions in the pathway plant hormone metabolism; auxin conjugation. The protein is Indole-3-acetate beta-glucosyltransferase (IAGLU) of Zea mays (Maize).